Reading from the N-terminus, the 292-residue chain is MYSSSSIEGNLYGFSEQEPQRAPIGVFDSGVGGLTVLRQIYRQLPNESVIYFGDTARLPYGIRSQAEILTFVRDILDWMQQQHVKMVVMACNTSSALALDIVREEYDFPILGVILPGAKAAVQQGKRIGVISTPATAKSNAYRQAIWEIDPNVEVWQVGCPEFVPLIEQNRIQDPYTTEVARAYLEPLIQQDIDTLVYGCTHYPLLAPVLRSLLPPQVKIIDPAVHVVTACTQELDILGLSNTHPPLPTRFAVSGCPQQFSQSGVNWLGYTPLVEAVDFTGIPVSQLQQDLA.

Substrate-binding positions include 28–29 (DS) and 60–61 (YG). Residue C91 is the Proton donor/acceptor of the active site. 92–93 (NT) contributes to the substrate binding site. Catalysis depends on C200, which acts as the Proton donor/acceptor. 201-202 (TH) provides a ligand contact to substrate.

Belongs to the aspartate/glutamate racemases family.

It catalyses the reaction L-glutamate = D-glutamate. Its pathway is cell wall biogenesis; peptidoglycan biosynthesis. Its function is as follows. Provides the (R)-glutamate required for cell wall biosynthesis. This chain is Glutamate racemase, found in Trichormus variabilis (strain ATCC 29413 / PCC 7937) (Anabaena variabilis).